Here is a 285-residue protein sequence, read N- to C-terminus: Probable endonuclease 4 (285 aa).

Zn(2+) contacts are provided by His69, His109, Glu145, Asp179, His182, His216, Asp229, His231, and Glu261.

It belongs to the AP endonuclease 2 family. Requires Zn(2+) as cofactor.

It catalyses the reaction Endonucleolytic cleavage to 5'-phosphooligonucleotide end-products.. In terms of biological role, endonuclease IV plays a role in DNA repair. It cleaves phosphodiester bonds at apurinic or apyrimidinic (AP) sites, generating a 3'-hydroxyl group and a 5'-terminal sugar phosphate. The chain is Probable endonuclease 4 from Salmonella typhi.